Consider the following 267-residue polypeptide: Putative carbamate hydrolase RutD (267 aa).

In terms of domain architecture, AB hydrolase-1 spans Val-23–His-139.

The protein belongs to the AB hydrolase superfamily. Hydrolase RutD family.

The enzyme catalyses carbamate + 2 H(+) = NH4(+) + CO2. Involved in pyrimidine catabolism. May facilitate the hydrolysis of carbamate, a reaction that can also occur spontaneously. In Caulobacter segnis (strain ATCC 21756 / DSM 7131 / JCM 7823 / NBRC 15250 / LMG 17158 / TK0059) (Mycoplana segnis), this protein is Putative carbamate hydrolase RutD.